We begin with the raw amino-acid sequence, 351 residues long: Nicotinate-nucleotide--dimethylbenzimidazole phosphoribosyltransferase (351 aa).

Residue Glu313 is the Proton acceptor of the active site.

This sequence belongs to the CobT family.

The catalysed reaction is 5,6-dimethylbenzimidazole + nicotinate beta-D-ribonucleotide = alpha-ribazole 5'-phosphate + nicotinate + H(+). It participates in nucleoside biosynthesis; alpha-ribazole biosynthesis; alpha-ribazole from 5,6-dimethylbenzimidazole: step 1/2. Its function is as follows. Catalyzes the synthesis of alpha-ribazole-5'-phosphate from nicotinate mononucleotide (NAMN) and 5,6-dimethylbenzimidazole (DMB). The polypeptide is Nicotinate-nucleotide--dimethylbenzimidazole phosphoribosyltransferase (Mycobacterium leprae (strain Br4923)).